Here is a 193-residue protein sequence, read N- to C-terminus: Bcl-2-binding component 3 (193 aa).

Disordered regions lie at residues 1-32 (MARA…RLMP) and 71-131 (ALGG…VEEE). Position 10 is a phosphoserine (Ser10). The BH3 signature appears at 137–151 (IGAQLRRMADDLNAQ).

This sequence belongs to the Bcl-2 family. In terms of assembly, interacts with MCL1 and BCL2A1. Interacts (via BH3 domain) with BCL2 and BCL2L1/BCL-XL. Interacts (via BH3 domain) with NOL3/ARC (via CARD domain); this interaction prevents BBC3 association with BCL2 and results in CASP8 activation.

The protein resides in the mitochondrion. Its function is as follows. Essential mediator of p53/TP53-dependent and p53/TP53-independent apoptosis. Promotes partial unfolding of BCL2L1 and dissociation of BCL2L1 from p53/TP53, releasing the bound p53/TP53 to induce apoptosis. Regulates ER stress-induced neuronal apoptosis. This is Bcl-2-binding component 3 (Bbc3) from Rattus norvegicus (Rat).